The primary structure comprises 417 residues: Spermidine/putrescine import ATP-binding protein PotA (417 aa).

The region spanning 5-308 is the ABC transporter domain; the sequence is IILKDLTKVF…PANRFVAQFV (304 aa). Residue 37 to 44 participates in ATP binding; the sequence is GPSGCGKT. Positions 105 to 177 are insert; it reads DFNSKIKANL…TALKCKKINK (73 aa).

The protein belongs to the ABC transporter superfamily. Spermidine/putrescine importer (TC 3.A.1.11.1) family. The complex is composed of two ATP-binding proteins (PotA), two transmembrane proteins (PotB and PotC) and a solute-binding protein (PotD).

The protein resides in the cell membrane. It carries out the reaction ATP + H2O + polyamine-[polyamine-binding protein]Side 1 = ADP + phosphate + polyamineSide 2 + [polyamine-binding protein]Side 1.. Functionally, part of the ABC transporter complex PotABCD involved in spermidine/putrescine import. Responsible for energy coupling to the transport system. This is Spermidine/putrescine import ATP-binding protein PotA from Onion yellows phytoplasma (strain OY-M).